The chain runs to 298 residues: Probable 2-(5''-triphosphoribosyl)-3'-dephosphocoenzyme-A synthase (298 aa).

This sequence belongs to the CitG/MdcB family.

The catalysed reaction is 3'-dephospho-CoA + ATP = 2'-(5''-triphospho-alpha-D-ribosyl)-3'-dephospho-CoA + adenine. This chain is Probable 2-(5''-triphosphoribosyl)-3'-dephosphocoenzyme-A synthase, found in Salmonella arizonae (strain ATCC BAA-731 / CDC346-86 / RSK2980).